Here is a 3093-residue protein sequence, read N- to C-terminus: Genome polyprotein (3093 aa).

The Peptidase S30 domain occupies 255–403 (KRLLRHVHQA…TTTGERIEYY (149 aa)). Residues His311, Asp323, and Ser355 each act as for P1 proteinase activity in the active site. In terms of domain architecture, Peptidase C6 spans 690–809 (HYVPKVGYCY…ASELKEYEIG (120 aa)). Catalysis depends on for helper component proteinase activity residues Cys698 and His769. In terms of domain architecture, Helicase ATP-binding spans 1215–1366 (RVLADKDNEF…AQKSLDIMTL (152 aa)). 1228 to 1235 (GHVGCGKS) lines the ATP pocket. A DEVH box motif is present at residues 1316–1319 (DEVH). Positions 1367 to 1546 (PTMTPLDFVK…QVPPVLRNVN (180 aa)) constitute a Helicase C-terminal domain. Residues 1883–1895 (DKVRKKANVHAMQ) carry the Nuclear localization signal motif. Tyr1915 carries the O-(5'-phospho-RNA)-tyrosine modification. Residues 2041–2257 (SKALYGGPRC…VDVGGLYIHN (217 aa)) form the Peptidase C4 domain. Catalysis depends on for nuclear inclusion protein A activity residues His2082, Asp2121, and Cys2193. The region spanning 2516–2639 (EWFIDADGSQ…NANEEAKDVV (124 aa)) is the RdRp catalytic domain. Low complexity predominate over residues 2800–2826 (NAAATSGATTPAQNVGAGTTTPAKATP). The interval 2800-2842 (NAAATSGATTPAQNVGAGTTTPAKATPQSGRRPSFGSLIDNPI) is disordered.

This sequence belongs to the potyviridae genome polyprotein family. VPg is uridylylated by the polymerase and is covalently attached to the 5'-end of the genomic RNA. This uridylylated form acts as a nucleotide-peptide primer for the polymerase. In terms of processing, genome polyprotein of potyviruses undergoes post-translational proteolytic processing by the main proteinase NIa-pro resulting in the production of at least ten individual proteins. The P1 proteinase and the HC-pro cleave only their respective C-termini autocatalytically. 6K1 is essential for proper proteolytic separation of P3 from CI.

Its subcellular location is the host cytoplasmic vesicle. It localises to the virion. It catalyses the reaction RNA(n) + a ribonucleoside 5'-triphosphate = RNA(n+1) + diphosphate. The catalysed reaction is Hydrolyzes glutaminyl bonds, and activity is further restricted by preferences for the amino acids in P6 - P1' that vary with the species of potyvirus, e.g. Glu-Xaa-Xaa-Tyr-Xaa-Gln-|-(Ser or Gly) for the enzyme from tobacco etch virus. The natural substrate is the viral polyprotein, but other proteins and oligopeptides containing the appropriate consensus sequence are also cleaved.. It carries out the reaction Hydrolyzes a Gly-|-Gly bond at its own C-terminus, commonly in the sequence -Tyr-Xaa-Val-Gly-|-Gly, in the processing of the potyviral polyprotein.. Its function is as follows. Required for aphid transmission and also has proteolytic activity. Only cleaves a Gly-Gly dipeptide at its own C-terminus. Interacts with virions and aphid stylets. Acts as a suppressor of RNA-mediated gene silencing, also known as post-transcriptional gene silencing (PTGS), a mechanism of plant viral defense that limits the accumulation of viral RNAs. May have RNA-binding activity. Functionally, has helicase activity. It may be involved in replication. In terms of biological role, indispensable for virus replication. Reduces the abundance of host transcripts related to jasmonic acid biosynthesis therefore altering the host defenses. In order to increase its own stability, decreases host protein degradation pathways. Indispensable for virus replication. Its function is as follows. Mediates the cap-independent, EIF4E-dependent translation of viral genomic RNAs. Binds to the cap-binding site of host EIF4E and thus interferes with the host EIF4E-dependent mRNA export and translation. VPg-RNA directly binds EIF4E and is a template for transcription. Also forms trimeric complexes with EIF4E-EIF4G, which are templates for translation. Functionally, has RNA-binding and proteolytic activities. In terms of biological role, an RNA-dependent RNA polymerase that plays an essential role in the virus replication. Involved in aphid transmission, cell-to-cell and systemis movement, encapsidation of the viral RNA and in the regulation of viral RNA amplification. This is Genome polyprotein from Brome streak virus (strain 11-Cal) (BStV).